An 86-amino-acid polypeptide reads, in one-letter code: UPF0180 protein CA_C1486 (86 aa).

Belongs to the UPF0180 family.

The polypeptide is UPF0180 protein CA_C1486 (Clostridium acetobutylicum (strain ATCC 824 / DSM 792 / JCM 1419 / IAM 19013 / LMG 5710 / NBRC 13948 / NRRL B-527 / VKM B-1787 / 2291 / W)).